Consider the following 470-residue polypeptide: Argininosuccinate lyase (470 aa).

The protein belongs to the lyase 1 family. Argininosuccinate lyase subfamily.

It is found in the cytoplasm. It carries out the reaction 2-(N(omega)-L-arginino)succinate = fumarate + L-arginine. It participates in amino-acid biosynthesis; L-arginine biosynthesis; L-arginine from L-ornithine and carbamoyl phosphate: step 3/3. This Mycobacterium tuberculosis (strain ATCC 25618 / H37Rv) protein is Argininosuccinate lyase.